The following is a 1500-amino-acid chain: Carbamoyl-phosphate synthase [ammonia], mitochondrial (1500 aa).

The transit peptide at 1–38 (MTRILTAFKVVRTLKTGFGFTNVTAHQKWKFSRPGIRL) directs the protein to the mitochondrion. The tract at residues 39–218 (LSVKAQTAHI…VKVYGKGNPT (180 aa)) is anthranilate phosphoribosyltransferase homolog. K55, K57, and K119 each carry N6-acetyllysine; alternate. Position 55 is an N6-glutaryllysine; alternate (K55). Residues K55, K57, and K119 each carry the N6-succinyllysine; alternate modification. The residue at position 148 (S148) is a Phosphoserine. 2 positions are modified to N6-acetyllysine; alternate: K157 and K171. N6-succinyllysine; alternate is present on K157. K171 is modified (N6-glutaryllysine; alternate). K176 bears the N6-glutaryllysine mark. An N6-acetyllysine mark is found at K182 and K197. Residues K207, K210, K214, K219, and K228 each carry the N6-acetyllysine; alternate modification. 5 positions are modified to N6-glutaryllysine; alternate: K207, K210, K214, K219, and K228. K207 carries the post-translational modification N6-succinyllysine; alternate. K214 bears the N6-succinyllysine; alternate mark. The Glutamine amidotransferase type-1 domain occupies 219-404 (KVVAVDCGIK…FSLIKKGKAT (186 aa)). Position 237 is an N6-glutaryllysine (K237). Residues K280, K287, K307, and K310 each carry the N6-acetyllysine; alternate modification. An N6-glutaryllysine; alternate modification is found at K280. K287 and K307 each carry N6-succinyllysine; alternate. 2 positions are modified to N6-glutaryllysine; alternate: K307 and K310. Residue K400 is modified to N6-succinyllysine. N6-glutaryllysine; alternate occurs at positions 402, 412, 453, and 458. Residues K402 and K412 each carry the N6-succinyllysine; alternate modification. N6-acetyllysine; alternate is present on residues K412, K453, K458, K522, K527, and K532. N6-succinyllysine; alternate occurs at positions 458, 522, and 527. K527 and K532 each carry N6-glutaryllysine; alternate. S537 bears the Phosphoserine; alternate mark. An O-linked (GlcNAc) serine; alternate glycan is attached at S537. Residue S540 is modified to Phosphoserine. The ATP-grasp 1 domain maps to 551–743 (SDKLNEINEK…LAFIAAKIAL (193 aa)). N6-acetyllysine; alternate occurs at positions 553 and 560. An N6-glutaryllysine; alternate modification is found at K553. N6-succinyllysine; alternate occurs at positions 553 and 560. S569 carries the post-translational modification Phosphoserine. Residues K575 and K612 each carry the N6-acetyllysine; alternate modification. Residues K575 and K612 each carry the N6-succinyllysine; alternate modification. K630 carries the N6-acetyllysine modification. K728 carries the N6-glutaryllysine modification. Residues K751, K757, K772, K793, K811, and K831 each carry the N6-acetyllysine; alternate modification. 2 positions are modified to N6-succinyllysine; alternate: K751 and K757. 4 positions are modified to N6-glutaryllysine; alternate: K757, K772, K793, and K811. K793 is subject to N6-succinyllysine; alternate. K831 carries the N6-succinyllysine; alternate modification. Position 835 is a phosphoserine (S835). N6-acetyllysine; alternate is present on residues K841 and K856. Residues K841 and K856 each carry the N6-glutaryllysine; alternate modification. At K869 the chain carries N6-glutaryllysine. 3 positions are modified to N6-acetyllysine; alternate: K875, K889, and K892. 3 positions are modified to N6-glutaryllysine; alternate: K875, K889, and K892. Residues K875, K889, and K892 each carry the N6-succinyllysine; alternate modification. S896 and S898 each carry phosphoserine. Residue K905 is modified to N6-glutaryllysine. K908, K915, and K919 each carry N6-acetyllysine; alternate. 3 positions are modified to N6-glutaryllysine; alternate: K908, K915, and K919. N6-succinyllysine; alternate occurs at positions 915 and 919. N6-acetyllysine is present on K935. S1036 is modified (phosphoserine). K1074 carries the post-translational modification N6-acetyllysine; alternate. An N6-glutaryllysine; alternate modification is found at K1074. K1074 bears the N6-succinyllysine; alternate mark. A phosphoserine mark is found at S1079, S1090, and S1093. In terms of domain architecture, ATP-grasp 2 spans 1093-1284 (SAVLDELKVA…FIDVATKVMI (192 aa)). Position 1100 is an N6-acetyllysine; alternate (K1100). An N6-succinyllysine; alternate modification is found at K1100. An N6-succinyllysine modification is found at K1149. K1150 bears the N6-glutaryllysine mark. K1168 and K1183 each carry N6-acetyllysine; alternate. Residues K1168 and K1183 each carry the N6-glutaryllysine; alternate modification. An N6-succinyllysine; alternate mark is found at K1168 and K1183. S1203 is subject to Phosphoserine. Residue K1222 is modified to N6-acetyllysine. Position 1224 is an N6-glutaryllysine (K1224). K1232, K1269, and K1291 each carry N6-acetyllysine; alternate. An N6-succinyllysine; alternate mark is found at K1232, K1269, and K1291. A glycan (O-linked (GlcNAc) serine) is linked at S1331. An O-linked (GlcNAc) threonine glycan is attached at T1332. The 146-residue stretch at 1355-1500 (FKIPQKGILI…YRQYSAGKAA (146 aa)) folds into the MGS-like domain. At K1356 the chain carries N6-acetyllysine; alternate. An N6-glutaryllysine; alternate mark is found at K1356 and K1360. N6-succinyllysine; alternate occurs at positions 1356 and 1360. The N-acetyl-L-glutamate site is built by T1391, T1394, and W1410. A phosphoserine mark is found at S1419 and S1431. N-acetyl-L-glutamate is bound by residues N1437 and N1440. K1444 carries the N6-acetyllysine; alternate modification. Residue K1444 is modified to N6-succinyllysine; alternate. N-acetyl-L-glutamate is bound at residue N1449. An N6-acetyllysine; alternate mark is found at K1471, K1479, and K1486. N6-succinyllysine; alternate occurs at positions 1471, 1479, and 1486. Residues K1479 and K1486 each carry the N6-glutaryllysine; alternate modification.

As to quaternary structure, can form homooligomers (monomers as predominant form and dimers). In terms of processing, undergoes proteolytic cleavage in the C-terminal region corresponding to the loss of approximately 12 AA residues from the C-terminus. Post-translationally, succinylated at Lys-287 and Lys-1291. Desuccinylated at Lys-1291 by SIRT5, leading to activation. Glutarylated. Glutarylation levels increase during fasting. Deglutarylated by SIRT5 at Lys-55, Lys-219, Lys-412, Lys-889, Lys-892, Lys-915, Lys-1360 and Lys-1486, leading to activation. As to expression, primarily in the liver and small intestine.

Its subcellular location is the mitochondrion. The protein localises to the nucleus. It localises to the nucleolus. The protein resides in the cell membrane. It catalyses the reaction hydrogencarbonate + NH4(+) + 2 ATP = carbamoyl phosphate + 2 ADP + phosphate + 2 H(+). Its activity is regulated as follows. Requires N-acetyl-L-glutamate (NAG) as an allosteric activator. Activated by glycerol in the absence of NAG, whereas in the presence of NAG it is inhibited by increasing concentrations of glycerol. Involved in the urea cycle of ureotelic animals where the enzyme plays an important role in removing excess ammonia from the cell. The polypeptide is Carbamoyl-phosphate synthase [ammonia], mitochondrial (CPS1) (Homo sapiens (Human)).